Reading from the N-terminus, the 73-residue chain is Sec-independent protein translocase protein TatA (73 aa).

The helical transmembrane segment at Met1–Gly21 threads the bilayer.

The protein belongs to the TatA/E family. The Tat system comprises two distinct complexes: a TatABC complex, containing multiple copies of TatA, TatB and TatC subunits, and a separate TatA complex, containing only TatA subunits. Substrates initially bind to the TatABC complex, which probably triggers association of the separate TatA complex to form the active translocon.

It is found in the cell inner membrane. In terms of biological role, part of the twin-arginine translocation (Tat) system that transports large folded proteins containing a characteristic twin-arginine motif in their signal peptide across membranes. TatA could form the protein-conducting channel of the Tat system. This chain is Sec-independent protein translocase protein TatA, found in Mesorhizobium japonicum (strain LMG 29417 / CECT 9101 / MAFF 303099) (Mesorhizobium loti (strain MAFF 303099)).